The primary structure comprises 382 residues: Processive diacylglycerol beta-glucosyltransferase (382 aa).

The protein belongs to the glycosyltransferase 28 family. UgtP subfamily.

It is found in the cell membrane. It catalyses the reaction a 1,2-diacyl-3-O-(beta-D-glucopyranosyl)-sn-glycerol + UDP-alpha-D-glucose = a 1,2-diacyl-3-O-(beta-D-Glc-(1-&gt;6)-beta-D-Glc)-sn-glycerol + UDP + H(+). The enzyme catalyses a 1,2-diacyl-3-O-(beta-D-Glc-(1-&gt;6)-beta-D-Glc)-sn-glycerol + UDP-alpha-D-glucose = a 1,2-diacyl-3-O-(beta-D-Glc-(1-&gt;6)-beta-D-Glc-(1-&gt;6)-beta-D-Glc)-sn-glycerol + UDP + H(+). It carries out the reaction a 1,2-diacyl-sn-glycerol + UDP-alpha-D-glucose = a 1,2-diacyl-3-O-(beta-D-glucopyranosyl)-sn-glycerol + UDP + H(+). Its pathway is glycolipid metabolism; diglucosyl-diacylglycerol biosynthesis. Processive glucosyltransferase involved in the biosynthesis of both the bilayer- and non-bilayer-forming membrane glucolipids. Is able to successively transfer up to three glucosyl residues to diacylglycerol (DAG), thereby catalyzing the formation of beta-monoglucosyl-DAG (3-O-(beta-D-glucopyranosyl)-1,2-diacyl-sn-glycerol), beta-diglucosyl-DAG (3-O-(beta-D-glucopyranosyl-beta-(1-&gt;6)-D-glucopyranosyl)-1,2-diacyl-sn-glycerol) and beta-triglucosyl-DAG (3-O-(beta-D-glucopyranosyl-beta-(1-&gt;6)-D-glucopyranosyl-beta-(1-&gt;6)-D-glucopyranosyl)-1,2-diacyl-sn-glycerol). Beta-diglucosyl-DAG is the predominant glycolipid found in Bacillales and is also used as a membrane anchor for lipoteichoic acid (LTA). Also seems to be able to form beta-tetraglucosyl-DAG, although this glycolipid has not been found in B.subtilis membrane. UgtP can only use UDP-glucose as sugar donor. This Bacillus subtilis (strain 168) protein is Processive diacylglycerol beta-glucosyltransferase.